The chain runs to 122 residues: Ferredoxin (122 aa).

Positions 1-33 are disordered; it reads MSHDRRLTVGSLLPNQPRPVAVPKAPSVVQPSK. The segment at 8-14 is targeting peptide; the sequence is TVGSLLP. A 2Fe-2S ferredoxin-type domain is found at 40–122; the sequence is AIIRLEQNGR…FRLACQANME (83 aa). Residues cysteine 75, cysteine 80, cysteine 83, and cysteine 117 each coordinate [2Fe-2S] cluster.

The protein belongs to the 2Fe2S plant-type ferredoxin family. The cofactor is [2Fe-2S] cluster.

It localises to the encapsulin nanocompartment. Its function is as follows. Cargo protein of a type 1 encapsulin nanocompartment. An iron-binding protein probably involved in iron mineralization in the encapsulin nanocompartment. 2 different cargo proteins have been identified (IMEF and Fer); when both are expressed in E.coli with the shell protein only IMEF is detected within the nanocompartment. E.coli expressing all 3 genes stores the largest amount of iron and is protected from Fe/H2O2-induced oxidative stress. This Bacillus thermotolerans (Quasibacillus thermotolerans) protein is Ferredoxin.